The chain runs to 296 residues: Ribosomal RNA small subunit methyltransferase H (296 aa).

S-adenosyl-L-methionine is bound by residues 38 to 40 (GAH), Glu-57, Phe-80, Asp-103, and His-110.

Belongs to the methyltransferase superfamily. RsmH family.

It is found in the cytoplasm. The enzyme catalyses cytidine(1402) in 16S rRNA + S-adenosyl-L-methionine = N(4)-methylcytidine(1402) in 16S rRNA + S-adenosyl-L-homocysteine + H(+). In terms of biological role, specifically methylates the N4 position of cytidine in position 1402 (C1402) of 16S rRNA. This is Ribosomal RNA small subunit methyltransferase H from Borrelia garinii subsp. bavariensis (strain ATCC BAA-2496 / DSM 23469 / PBi) (Borreliella bavariensis).